The chain runs to 514 residues: HMG box-containing protein 1 (514 aa).

The tract at residues 150–182 (ARPPPVSSSSKSEPAFPHHHWKEETPVRHERAN) is disordered. Over residues 170–182 (WKEETPVRHERAN) the composition is skewed to basic and acidic residues. Residues 203-345 (WCNSWPSTVW…PPGHLDAINF (143 aa)) form the AXH domain. The segment at residues 434 to 502 (CKRPMNAFML…EQKRLNPDCW (69 aa)) is a DNA-binding region (HMG box).

In terms of assembly, binds TCF4. Binds RB1. Binds the second PAH repeat of SIN3A. Ubiquitinated by the CTLH E3 ubiquitin-protein ligase complex, leading to subsequent proteasomal degradation.

The protein localises to the nucleus. Its function is as follows. Transcriptional repressor that binds to the promoter region of target genes. Plays a role in the regulation of the cell cycle and of the Wnt pathway. Binds preferentially to the sequence 5'-TTCATTCATTCA-3'. Binding to the histone H1.0 promoter is enhanced by interaction with RB1. Disrupts the interaction between DNA and TCF4. The protein is HMG box-containing protein 1 (HBP1) of Pongo abelii (Sumatran orangutan).